The sequence spans 129 residues: Small ribosomal subunit protein uS8 (129 aa).

This sequence belongs to the universal ribosomal protein uS8 family. In terms of assembly, part of the 30S ribosomal subunit. Contacts proteins S5 and S12.

One of the primary rRNA binding proteins, it binds directly to 16S rRNA central domain where it helps coordinate assembly of the platform of the 30S subunit. In Spiroplasma kunkelii, this protein is Small ribosomal subunit protein uS8.